The chain runs to 220 residues: Protein-L-isoaspartate O-methyltransferase (220 aa).

S69 is a catalytic residue.

Belongs to the methyltransferase superfamily. L-isoaspartyl/D-aspartyl protein methyltransferase family.

Its subcellular location is the cytoplasm. The catalysed reaction is [protein]-L-isoaspartate + S-adenosyl-L-methionine = [protein]-L-isoaspartate alpha-methyl ester + S-adenosyl-L-homocysteine. Functionally, catalyzes the methyl esterification of L-isoaspartyl residues in peptides and proteins that result from spontaneous decomposition of normal L-aspartyl and L-asparaginyl residues. It plays a role in the repair and/or degradation of damaged proteins. This Alcanivorax borkumensis (strain ATCC 700651 / DSM 11573 / NCIMB 13689 / SK2) protein is Protein-L-isoaspartate O-methyltransferase.